A 199-amino-acid polypeptide reads, in one-letter code: Recombination protein RecR (199 aa).

The C4-type zinc-finger motif lies at 56–71 (CQVCFHLSAESTCEIC). The 95-residue stretch at 79–173 (QTLCVVADSR…KVTRIAFGLP (95 aa)) folds into the Toprim domain.

It belongs to the RecR family.

Its function is as follows. May play a role in DNA repair. It seems to be involved in an RecBC-independent recombinational process of DNA repair. It may act with RecF and RecO. The sequence is that of Recombination protein RecR from Gloeothece citriformis (strain PCC 7424) (Cyanothece sp. (strain PCC 7424)).